The chain runs to 98 residues: Integration host factor subunit beta (98 aa).

This sequence belongs to the bacterial histone-like protein family. Heterodimer of an alpha and a beta chain.

In terms of biological role, this protein is one of the two subunits of integration host factor, a specific DNA-binding protein that functions in genetic recombination as well as in transcriptional and translational control. This is Integration host factor subunit beta from Gluconacetobacter diazotrophicus (strain ATCC 49037 / DSM 5601 / CCUG 37298 / CIP 103539 / LMG 7603 / PAl5).